The chain runs to 409 residues: 2-methylfumaryl-CoA isomerase (409 aa).

Asp-165 acts as the Nucleophile in catalysis.

Belongs to the CoA-transferase III family. Mesaconyl-CoA isomerase subfamily. Homodimer.

It catalyses the reaction 2-methylfumaryl-CoA = 3-methylfumaryl-CoA. Its activity is regulated as follows. Partially inhibited by hydroxylamine. Its function is as follows. Involved in the glyoxylate assimilation cycle used to regenerate acetyl-CoA and produce pyruvate as universal precursor for biosynthesis. This reaction involves an intramolecular CoA transferase that catalyzes the reversible transfer of the CoA moiety from the C1-carboxyl group of mesaconyl-CoA to the C4-carboxyl group. It does not require free mesaconate as CoA acceptor. The polypeptide is 2-methylfumaryl-CoA isomerase (mct) (Chloroflexus aurantiacus (strain ATCC 29366 / DSM 635 / J-10-fl)).